The sequence spans 591 residues: Protein phosphatase EYA1 (591 aa).

3 disordered regions span residues Met1–His95, Gly150–Phe169, and Met239–Asp319. The span at Ser8–Pro23 shows a compositional bias: low complexity. A compositionally biased stretch (polar residues) spans Ser28–Ala53. Residues Ala56–Ser75 are compositionally biased toward low complexity. The span at Pro78–Ile87 shows a compositional bias: pro residues. Residues Thr240–Asn252 are compositionally biased toward low complexity. Positions Ala253 to Ile286 are enriched in polar residues. The segment covering Lys287 to Ser302 has biased composition (basic and acidic residues). Catalysis depends on Asp327, which acts as the Nucleophile. The Mg(2+) site is built by Asp327, Asp329, and Asp555. Asp329 serves as the catalytic Proton donor.

Belongs to the HAD-like hydrolase superfamily. EYA family. In terms of assembly, probably interacts with SIX2, SIX4 and SIX5. Interacts with H2AX in response to DNA damage. Interacts with SIX3; promotes EYA1 translocation to the nucleus. Requires Mg(2+) as cofactor. Sumoylated with SUMO1. In terms of tissue distribution, extensively expressed in cranial placodes, branchial arches, CNS and developing eye and nose.

It is found in the cytoplasm. It localises to the nucleus. The catalysed reaction is O-phospho-L-tyrosyl-[protein] + H2O = L-tyrosyl-[protein] + phosphate. The enzyme catalyses O-phospho-L-seryl-[protein] + H2O = L-seryl-[protein] + phosphate. It carries out the reaction O-phospho-L-threonyl-[protein] + H2O = L-threonyl-[protein] + phosphate. Its function is as follows. Functions both as protein phosphatase and as transcriptional coactivator for SIX1, and probably also for SIX2, SIX4 and SIX5. Tyrosine phosphatase that dephosphorylates 'Tyr-142' of histone H2AX (H2AXY142ph) and promotes efficient DNA repair via the recruitment of DNA repair complexes containing MDC1. 'Tyr-142' phosphorylation of histone H2AX plays a central role in DNA repair and acts as a mark that distinguishes between apoptotic and repair responses to genotoxic stress. Its function as histone phosphatase may contribute to its function in transcription regulation during organogenesis. Also has phosphatase activity with proteins phosphorylated on Ser and Thr residues (in vitro). Required for normal embryonic development of the craniofacial and trunk skeleton, kidneys and ears. Together with SIX1, it plays an important role in hypaxial muscle development; in this it is functionally redundant with EYA2. The chain is Protein phosphatase EYA1 (Eya1) from Mus musculus (Mouse).